Reading from the N-terminus, the 277-residue chain is Diaminopimelate epimerase (277 aa).

The substrate site is built by asparagine 11 and asparagine 62. Catalysis depends on cysteine 71, which acts as the Proton donor. Substrate contacts are provided by residues 72-73, asparagine 160, asparagine 193, and 211-212; these read GN and ER. Cysteine 220 (proton acceptor) is an active-site residue. Residue 221–222 participates in substrate binding; it reads GT.

The protein belongs to the diaminopimelate epimerase family. In terms of assembly, homodimer.

The protein localises to the cytoplasm. The catalysed reaction is (2S,6S)-2,6-diaminopimelate = meso-2,6-diaminopimelate. Its pathway is amino-acid biosynthesis; L-lysine biosynthesis via DAP pathway; DL-2,6-diaminopimelate from LL-2,6-diaminopimelate: step 1/1. In terms of biological role, catalyzes the stereoinversion of LL-2,6-diaminopimelate (L,L-DAP) to meso-diaminopimelate (meso-DAP), a precursor of L-lysine. The chain is Diaminopimelate epimerase from Methanococcus maripaludis (strain DSM 14266 / JCM 13030 / NBRC 101832 / S2 / LL).